The chain runs to 361 residues: Phosphoserine aminotransferase (361 aa).

Arg43 is an L-glutamate binding site. Residues 77-78, Trp103, Thr153, Asp173, and Gln196 each bind pyridoxal 5'-phosphate; that span reads AS. Position 197 is an N6-(pyridoxal phosphate)lysine (Lys197). 238 to 239 is a pyridoxal 5'-phosphate binding site; the sequence is NT.

It belongs to the class-V pyridoxal-phosphate-dependent aminotransferase family. SerC subfamily. Homodimer. Pyridoxal 5'-phosphate serves as cofactor.

The protein localises to the cytoplasm. It catalyses the reaction O-phospho-L-serine + 2-oxoglutarate = 3-phosphooxypyruvate + L-glutamate. The enzyme catalyses 4-(phosphooxy)-L-threonine + 2-oxoglutarate = (R)-3-hydroxy-2-oxo-4-phosphooxybutanoate + L-glutamate. It participates in amino-acid biosynthesis; L-serine biosynthesis; L-serine from 3-phospho-D-glycerate: step 2/3. It functions in the pathway cofactor biosynthesis; pyridoxine 5'-phosphate biosynthesis; pyridoxine 5'-phosphate from D-erythrose 4-phosphate: step 3/5. In terms of biological role, catalyzes the reversible conversion of 3-phosphohydroxypyruvate to phosphoserine and of 3-hydroxy-2-oxo-4-phosphonooxybutanoate to phosphohydroxythreonine. This Pseudomonas fluorescens (strain SBW25) protein is Phosphoserine aminotransferase.